The sequence spans 334 residues: L-lactate dehydrogenase B-A chain (334 aa).

Residues 30-58 (GQVG…VEDR) and Arg-100 each bind NAD(+). 3 residues coordinate substrate: Arg-107, Asn-139, and Arg-170. Asn-139 lines the NAD(+) pocket. Catalysis depends on His-194, which acts as the Proton acceptor. Thr-249 serves as a coordination point for substrate.

This sequence belongs to the LDH/MDH superfamily. LDH family. In terms of assembly, homotetramer.

It is found in the cytoplasm. It carries out the reaction (S)-lactate + NAD(+) = pyruvate + NADH + H(+). It functions in the pathway fermentation; pyruvate fermentation to lactate; (S)-lactate from pyruvate: step 1/1. The sequence is that of L-lactate dehydrogenase B-A chain (ldhba) from Danio rerio (Zebrafish).